A 550-amino-acid chain; its full sequence is Arginine--tRNA ligase (550 aa).

The 'HIGH' region signature appears at 125 to 135 (ANPTGPLHIGH).

It belongs to the class-I aminoacyl-tRNA synthetase family. In terms of assembly, monomer.

Its subcellular location is the cytoplasm. The enzyme catalyses tRNA(Arg) + L-arginine + ATP = L-arginyl-tRNA(Arg) + AMP + diphosphate. The protein is Arginine--tRNA ligase of Lawsonia intracellularis (strain PHE/MN1-00).